Here is a 157-residue protein sequence, read N- to C-terminus: Ubiquitin-like protein 4A (157 aa).

Residues 1 to 76 form the Ubiquitin-like domain; the sequence is MQLTVKALQG…LNLVVKPLEK (76 aa). K48 is covalently cross-linked (Glycyl lysine isopeptide (Lys-Gly) (interchain with G-Cter in ubiquitin)). S90 bears the Phosphoserine mark. The tract at residues 96 to 138 is required and sufficient for interaction with BAG6; sequence WQLISKVLARHFSIGDASRVLEQLQRDYDRSLSRLTLDDIERL.

As to quaternary structure, component of the BAG6/BAT3 complex, at least composed of BAG6, UBL4A and GET4/TRC35. Interacts with BAG6; the interaction is direct and required for UBL4A protein stability. Interacts with USP13; may be indirect via BAG6. Post-translationally, polyubiquitinated. Ubiquitination by AMFR and deubiquitination by USP13 may regulate the interaction between the BAG6/BAT complex and SGTA and therefore may regulate client proteins fate.

It localises to the cytoplasm. Its subcellular location is the cytosol. It is found in the nucleus. Its function is as follows. As part of a cytosolic protein quality control complex, the BAG6/BAT3 complex, maintains misfolded and hydrophobic patches-containing proteins in a soluble state and participates in their proper delivery to the endoplasmic reticulum or alternatively can promote their sorting to the proteasome where they undergo degradation. The BAG6/BAT3 complex is involved in the post-translational delivery of tail-anchored/type II transmembrane proteins to the endoplasmic reticulum membrane. Recruited to ribosomes, it interacts with the transmembrane region of newly synthesized tail-anchored proteins and together with SGTA and ASNA1 mediates their delivery to the endoplasmic reticulum. Client proteins that cannot be properly delivered to the endoplasmic reticulum are ubiquitinated and sorted to the proteasome. Similarly, the BAG6/BAT3 complex also functions as a sorting platform for proteins of the secretory pathway that are mislocalized to the cytosol either delivering them to the proteasome for degradation or to the endoplasmic reticulum. The BAG6/BAT3 complex also plays a role in the endoplasmic reticulum-associated degradation (ERAD), a quality control mechanism that eliminates unwanted proteins of the endoplasmic reticulum through their retrotranslocation to the cytosol and their targeting to the proteasome. It maintains these retrotranslocated proteins in an unfolded yet soluble state condition in the cytosol to ensure their proper delivery to the proteasome. This is Ubiquitin-like protein 4A (Ubl4a) from Rattus norvegicus (Rat).